A 504-amino-acid chain; its full sequence is Lysine--tRNA ligase (504 aa).

The Mg(2+) site is built by Glu411 and Glu418.

This sequence belongs to the class-II aminoacyl-tRNA synthetase family. As to quaternary structure, homodimer. Requires Mg(2+) as cofactor.

The protein localises to the cytoplasm. It carries out the reaction tRNA(Lys) + L-lysine + ATP = L-lysyl-tRNA(Lys) + AMP + diphosphate. This is Lysine--tRNA ligase from Clostridium botulinum (strain Okra / Type B1).